The following is a 78-amino-acid chain: Large ribosomal subunit protein bL28 (78 aa).

The disordered stretch occupies residues 1-21 (MSRVCQVTGKRPVSGNNRSHA).

It belongs to the bacterial ribosomal protein bL28 family.

This chain is Large ribosomal subunit protein bL28, found in Sodalis glossinidius (strain morsitans).